A 274-amino-acid polypeptide reads, in one-letter code: NADPH-dependent 7-cyano-7-deazaguanine reductase (274 aa).

Positions 1 to 33 are disordered; it reads MPKKDALDHLSLGQHTDYPNEYDPKQLQPVPRS. Substrate is bound at residue 84 to 86; that stretch reads IES. Residue 86–87 coordinates NADPH; sequence SK. Cysteine 183 serves as the catalytic Thioimide intermediate. The active-site Proton donor is aspartate 190. A substrate-binding site is contributed by 222–223; the sequence is HE. 250 to 251 is an NADPH binding site; it reads RG.

The protein belongs to the GTP cyclohydrolase I family. QueF type 2 subfamily. Homodimer.

Its subcellular location is the cytoplasm. The enzyme catalyses 7-aminomethyl-7-carbaguanine + 2 NADP(+) = 7-cyano-7-deazaguanine + 2 NADPH + 3 H(+). It functions in the pathway tRNA modification; tRNA-queuosine biosynthesis. Functionally, catalyzes the NADPH-dependent reduction of 7-cyano-7-deazaguanine (preQ0) to 7-aminomethyl-7-deazaguanine (preQ1). This is NADPH-dependent 7-cyano-7-deazaguanine reductase from Idiomarina loihiensis (strain ATCC BAA-735 / DSM 15497 / L2-TR).